The primary structure comprises 172 residues: VQ motif-containing protein 17 (172 aa).

Positions 51 to 60 match the VQ motif; that stretch reads FREIVQNLTG. The segment at 60–97 is disordered; that stretch reads GKQDHHHHDLPHQKGLKRNPRSRRSHDHHEVHDMNKSH. The span at 61–71 shows a compositional bias: basic and acidic residues; that stretch reads KQDHHHHDLPH. The segment covering 72–85 has biased composition (basic residues); that stretch reads QKGLKRNPRSRRSH. A compositionally biased stretch (basic and acidic residues) spans 86 to 95; that stretch reads DHHEVHDMNK.

The protein resides in the nucleus. Functionally, may function as positive regulator of plant growth. The polypeptide is VQ motif-containing protein 17 (Arabidopsis thaliana (Mouse-ear cress)).